The sequence spans 81 residues: Large ribosomal subunit protein bL27m (81 aa).

Residues 1 to 11 (MATKKSGGSSR) are compositionally biased toward polar residues. Positions 1-20 (MATKKSGGSSRNGRDSKGRR) are disordered.

This sequence belongs to the bacterial ribosomal protein bL27 family.

The protein localises to the mitochondrion. In Reclinomonas americana, this protein is Large ribosomal subunit protein bL27m (RPL27).